A 502-amino-acid polypeptide reads, in one-letter code: ATP synthase subunit alpha, chloroplastic (502 aa).

170-177 lines the ATP pocket; sequence GDRQTGKT.

It belongs to the ATPase alpha/beta chains family. In terms of assembly, F-type ATPases have 2 components, CF(1) - the catalytic core - and CF(0) - the membrane proton channel. CF(1) has five subunits: alpha(3), beta(3), gamma(1), delta(1), epsilon(1). CF(0) has four main subunits: a, b, b' and c.

It is found in the plastid. It localises to the chloroplast thylakoid membrane. The catalysed reaction is ATP + H2O + 4 H(+)(in) = ADP + phosphate + 5 H(+)(out). Its function is as follows. Produces ATP from ADP in the presence of a proton gradient across the membrane. The alpha chain is a regulatory subunit. In Rhodomonas salina (Cryptomonas salina), this protein is ATP synthase subunit alpha, chloroplastic.